The primary structure comprises 177 residues: Nucleoside triphosphate/diphosphate phosphatase (177 aa).

The active-site Proton donor is the R23. Residues N87, D103, D105, D107, D120, and E123 each coordinate Mg(2+).

This sequence belongs to the Ntdp family. The cofactor is Mg(2+).

It catalyses the reaction a ribonucleoside 5'-triphosphate + H2O = a ribonucleoside 5'-diphosphate + phosphate + H(+). The enzyme catalyses a ribonucleoside 5'-diphosphate + H2O = a ribonucleoside 5'-phosphate + phosphate + H(+). In terms of biological role, has nucleoside phosphatase activity towards nucleoside triphosphates and nucleoside diphosphates. This Streptococcus pyogenes serotype M1 protein is Nucleoside triphosphate/diphosphate phosphatase.